Reading from the N-terminus, the 494-residue chain is Splicing regulatory glutamine/lysine-rich protein 1 (494 aa).

Residues 69–145 (RTVYVGNLNS…RPLKINHSNN (77 aa)) enclose the RRM domain. Phosphoserine is present on residues S174 and S187. The segment at 176-494 (ISAAIEPESG…ESPCSKADAV (319 aa)) is disordered. Over residues 183 to 192 (ESGKSNERKG) the composition is skewed to basic and acidic residues. Over residues 193–262 (GRSRSHTRSK…KSRSRSRSRD (70 aa)) the composition is skewed to basic residues. Residues 263–340 (KRKDTREKVK…DRSKETDEKR (78 aa)) are compositionally biased toward basic and acidic residues. At T348 the chain carries Phosphothreonine. A compositionally biased stretch (basic residues) spans 357 to 373 (RRSRSTSRERRRRRSRS). Basic and acidic residues predominate over residues 404-474 (REKERDHISD…SPRTEDEGKV (71 aa)). Residues 476–486 (HNGNCQPNEES) are compositionally biased toward polar residues. K490 participates in a covalent cross-link: Glycyl lysine isopeptide (Lys-Gly) (interchain with G-Cter in SUMO2).

The protein belongs to the splicing factor SR family. Homodimer. Binds SFRS1, SFRS2, SFRS3 and SFRS6. Interacts with the spliceosome. Interacts with SREK1IP1.

The protein resides in the nucleus. Its function is as follows. Participates in the regulation of alternative splicing by modulating the activity of other splice facors. Inhibits the splicing activity of SFRS1, SFRS2 and SFRS6. Augments the splicing activity of SFRS3. This chain is Splicing regulatory glutamine/lysine-rich protein 1 (Srek1), found in Mus musculus (Mouse).